A 236-amino-acid chain; its full sequence is Rho-related GTP-binding protein RhoV (236 aa).

Positions 1–27 (MPPRELSEAEPPPLPASTPPPRRRSAP) are disordered. Over residues 10–20 (EPPPLPASTPP) the composition is skewed to pro residues. Ser25 carries the post-translational modification Phosphoserine. Residues 38–45 (GDGAVGKS), 85–89 (DTAGQ), and 143–146 (TQAD) contribute to the GTP site. Cys234 carries the S-palmitoyl cysteine lipid modification.

This sequence belongs to the small GTPase superfamily. Rho family. In terms of assembly, interacts with PAK2. It depends on Mg(2+) as a cofactor.

The protein localises to the cell membrane. Its subcellular location is the endosome membrane. Its function is as follows. Plays a role in the control of the actin cytoskeleton via activation of the JNK pathway. This is Rho-related GTP-binding protein RhoV from Mus musculus (Mouse).